The sequence spans 380 residues: Glycogenin-2 (380 aa).

Positions 10, 16, and 95 each coordinate UDP. UDP-alpha-D-glucose contacts are provided by Leu-10, Tyr-16, Arg-95, Lys-104, Asp-120, Ala-121, Asp-122, Asn-158, Thr-159, Asp-185, Asp-188, and Gln-189. 3 residues coordinate UDP: Asp-120, Ala-121, and Asp-122. Asp-120 contributes to the Mn(2+) binding site. Asp-122 is a binding site for Mn(2+). Residues Tyr-230 and Tyr-232 are each glycosylated (O-linked (Glc...) tyrosine). Residues His-249, Gly-252, and Lys-255 each contribute to the UDP site. Residue His-249 participates in Mn(2+) binding. Positions 252 and 255 each coordinate UDP-alpha-D-glucose. The interval 331-357 (SVDRNASQKSTAEKHDIEKPTSKPQSA) is disordered. Basic and acidic residues predominate over residues 341–351 (TAEKHDIEKPT). Tyr-367 carries O-linked (Glc...) tyrosine glycosylation.

It belongs to the glycosyltransferase 8 family. Glycogenin subfamily. In terms of assembly, interacts with glycogen synthase GSY2. The cofactor is Mn(2+).

Its subcellular location is the cytoplasm. It localises to the vacuole. The catalysed reaction is L-tyrosyl-[glycogenin] + UDP-alpha-D-glucose = alpha-D-glucosyl-L-tyrosyl-[glycogenin] + UDP + H(+). The enzyme catalyses [1,4-alpha-D-glucosyl](n)-L-tyrosyl-[glycogenin] + UDP-alpha-D-glucose = [1,4-alpha-D-glucosyl](n+1)-L-tyrosyl-[glycogenin] + UDP + H(+). In terms of biological role, self-glucosylating initiator of glycogen synthesis. It catalyzes the formation of a short alpha (1,4)-glucosyl chain covalently attached via a glucose 1-O-tyrosyl linkage to internal tyrosine residues and these chains act as primers for the elongation reaction catalyzed by glycogen synthase. Capable of transferring glucosyl residues to unbound acceptors such as free oligoglucans or oligoglucan derivatives. The chain is Glycogenin-2 (GLG2) from Saccharomyces cerevisiae (strain YJM789) (Baker's yeast).